Here is a 340-residue protein sequence, read N- to C-terminus: Ketol-acid reductoisomerase (NADP(+)) (340 aa).

One can recognise a KARI N-terminal Rossmann domain in the interval 1 to 182 (MRVYYDRDCD…GGGRSGIIET (182 aa)). Residues 24-27 (YGSQ), R48, S51, S53, and 83-86 (DELQ) contribute to the NADP(+) site. Residue H108 is part of the active site. G134 contacts NADP(+). One can recognise a KARI C-terminal knotted domain in the interval 183 to 329 (NFRQECETDL…EKLRGMMPWI (147 aa)). Mg(2+)-binding residues include D191, E195, E227, and E231. S252 provides a ligand contact to substrate.

Belongs to the ketol-acid reductoisomerase family. Mg(2+) serves as cofactor.

The enzyme catalyses (2R)-2,3-dihydroxy-3-methylbutanoate + NADP(+) = (2S)-2-acetolactate + NADPH + H(+). It carries out the reaction (2R,3R)-2,3-dihydroxy-3-methylpentanoate + NADP(+) = (S)-2-ethyl-2-hydroxy-3-oxobutanoate + NADPH + H(+). The protein operates within amino-acid biosynthesis; L-isoleucine biosynthesis; L-isoleucine from 2-oxobutanoate: step 2/4. It functions in the pathway amino-acid biosynthesis; L-valine biosynthesis; L-valine from pyruvate: step 2/4. In terms of biological role, involved in the biosynthesis of branched-chain amino acids (BCAA). Catalyzes an alkyl-migration followed by a ketol-acid reduction of (S)-2-acetolactate (S2AL) to yield (R)-2,3-dihydroxy-isovalerate. In the isomerase reaction, S2AL is rearranged via a Mg-dependent methyl migration to produce 3-hydroxy-3-methyl-2-ketobutyrate (HMKB). In the reductase reaction, this 2-ketoacid undergoes a metal-dependent reduction by NADPH to yield (R)-2,3-dihydroxy-isovalerate. The sequence is that of Ketol-acid reductoisomerase (NADP(+)) from Cereibacter sphaeroides (strain ATCC 17023 / DSM 158 / JCM 6121 / CCUG 31486 / LMG 2827 / NBRC 12203 / NCIMB 8253 / ATH 2.4.1.) (Rhodobacter sphaeroides).